Consider the following 391-residue polypeptide: uncharacterized protein (391 aa).

Residues 85-314 (ATAAFVGFPS…LKEKIYEKLG (230 aa)) enclose the OBG-type G domain. GTP contacts are provided by residues 91 to 98 (GFPSVGKS), 137 to 141 (DAPGI), and 267 to 270 (NKID). In terms of domain architecture, TGS spans 314–389 (GFIKIYLKPQ…EDGDILTIVI (76 aa)).

The protein belongs to the TRAFAC class OBG-HflX-like GTPase superfamily. OBG GTPase family.

This is an uncharacterized protein from Methanocaldococcus jannaschii (strain ATCC 43067 / DSM 2661 / JAL-1 / JCM 10045 / NBRC 100440) (Methanococcus jannaschii).